The sequence spans 1082 residues: Error-prone DNA polymerase (1082 aa).

It belongs to the DNA polymerase type-C family. DnaE2 subfamily.

The protein resides in the cytoplasm. The enzyme catalyses DNA(n) + a 2'-deoxyribonucleoside 5'-triphosphate = DNA(n+1) + diphosphate. DNA polymerase involved in damage-induced mutagenesis and translesion synthesis (TLS). It is not the major replicative DNA polymerase. The chain is Error-prone DNA polymerase from Xanthomonas campestris pv. campestris (strain B100).